The sequence spans 126 residues: Fluoride-specific ion channel FluC (126 aa).

4 helical membrane passes run 4 to 24 (LLLV…TSAW), 36 to 56 (GTLL…TASL), 67 to 85 (LFLA…SFNY), and 101 to 121 (AYLL…TLLV). Na(+)-binding residues include glycine 75 and threonine 78.

Belongs to the fluoride channel Fluc/FEX (TC 1.A.43) family.

It is found in the cell inner membrane. It carries out the reaction fluoride(in) = fluoride(out). Its activity is regulated as follows. Na(+) is not transported, but it plays an essential structural role and its presence is essential for fluoride channel function. Its function is as follows. Fluoride-specific ion channel. Important for reducing fluoride concentration in the cell, thus reducing its toxicity. This is Fluoride-specific ion channel FluC from Anaeromyxobacter sp. (strain K).